A 594-amino-acid polypeptide reads, in one-letter code: Alanine--tRNA ligase (594 aa).

Zn(2+) is bound by residues His456, His460, Cys558, and His562.

This sequence belongs to the class-II aminoacyl-tRNA synthetase family. Zn(2+) is required as a cofactor.

It is found in the cytoplasm. It catalyses the reaction tRNA(Ala) + L-alanine + ATP = L-alanyl-tRNA(Ala) + AMP + diphosphate. Catalyzes the attachment of alanine to tRNA(Ala) in a two-step reaction: alanine is first activated by ATP to form Ala-AMP and then transferred to the acceptor end of tRNA(Ala). Also edits incorrectly charged Ser-tRNA(Ala) and Gly-tRNA(Ala) via its editing domain. The protein is Alanine--tRNA ligase (alaS) of Borrelia garinii subsp. bavariensis (strain ATCC BAA-2496 / DSM 23469 / PBi) (Borreliella bavariensis).